The chain runs to 141 residues: Bombinins BLP-7/H-BO (141 aa).

Positions 1–18 (MNFKYIIAVSFLIASTYA) are cleaved as a signal peptide. A propeptide spanning residues 19 to 43 (RSVKNDEQSLSQRDVLDEESLREIR) is cleaved from the precursor. Asparagine amide is present on Asn70. Residues 74–123 (TAEEHEVMKRLEAVMRDLDSLDHPEEASEKETRGFNQEEIANLFTKKEKR) constitute a propeptide that is removed on maturation. The residue at position 140 (Leu140) is a Leucine amide.

This sequence belongs to the bombinin family. As to expression, expressed by the skin glands.

The protein localises to the secreted. In terms of biological role, antimicrobial peptide with activity against Gram-positive and -negative bacteria and fungi. Shows activity against P.acnes (MIC=5 uM), E.coli (MIC=5-6.3 uM), S.aureus (MIC=5-6.3 uM), M.luteus, S.cerevisiae and C.albicans (MIC=10-12.5 uM). Also reduces the production of interleukin (IL)-8 and granulocyte-macrophage colony stimulating factor (CSF2) in normal human epidermal keratinocytes (NHEKs). Shows anticancer activity against three human hepatoma cell lines. In vivo, using the rat ear edema model, suppress P.acnes-induced skin inflammation, significantly reducing the ear thickness. Shows weak hemolytic activity against human erythrocytes. Its function is as follows. Shows weak antimicrobial activity (tested on E.coli, S.aureus and C.albicans). Shows high hemolytic activity against human erythrocytes (38% erythrocyte lysis at 80.0 uM, and up to 85% at 159.7 uM). This chain is Bombinins BLP-7/H-BO, found in Bombina orientalis (Oriental fire-bellied toad).